The sequence spans 274 residues: Putative phosphoenolpyruvate synthase regulatory protein (274 aa).

ADP is bound at residue 155–162 (GVSRSGKT).

This sequence belongs to the pyruvate, phosphate/water dikinase regulatory protein family. PSRP subfamily.

The catalysed reaction is [pyruvate, water dikinase] + ADP = [pyruvate, water dikinase]-phosphate + AMP + H(+). The enzyme catalyses [pyruvate, water dikinase]-phosphate + phosphate + H(+) = [pyruvate, water dikinase] + diphosphate. Functionally, bifunctional serine/threonine kinase and phosphorylase involved in the regulation of the phosphoenolpyruvate synthase (PEPS) by catalyzing its phosphorylation/dephosphorylation. The polypeptide is Putative phosphoenolpyruvate synthase regulatory protein (Laribacter hongkongensis (strain HLHK9)).